A 1817-amino-acid polypeptide reads, in one-letter code: Nuclear pore complex protein Nup98-Nup96 (1817 aa).

Residues 1–156 (MFNKSFGTPF…LFGPSSFTAA (156 aa)) are FG repeats 1. The segment at 157–213 (PTGTTIKFNPPTGTDTMVKAGVSTNISTKHQCITAMKEYESKSLEELRLEDYQANRK) is GLEBS; interaction with RAE1. Positions 214–480 (GPQNQVGAGT…NTTTATLGFG (267 aa)) are FG repeats 2. The interval 512-535 (PFGDSPLFRNPMSDPKKKEERLKP) is disordered. Residue S524 is modified to Phosphoserine. A compositionally biased stretch (basic and acidic residues) spans 525-534 (DPKKKEERLK). K563 is covalently cross-linked (Glycyl lysine isopeptide (Lys-Gly) (interchain with G-Cter in SUMO2)). K603 bears the N6-acetyllysine; alternate mark. K603 participates in a covalent cross-link: Glycyl lysine isopeptide (Lys-Gly) (interchain with G-Cter in SUMO2); alternate. Residues S608, S612, S618, S623, S625, and S653 each carry the phosphoserine modification. A disordered region spans residues 614–633 (VNRDSENLASPSEYPENGER). The disordered stretch occupies residues 662–682 (PIAKPIPQTPESAGNKHSNSN). K665 participates in a covalent cross-link: Glycyl lysine isopeptide (Lys-Gly) (interchain with G-Cter in SUMO2). A Phosphothreonine modification is found at T670. Residues 670-682 (TPESAGNKHSNSN) are compositionally biased toward polar residues. A phosphoserine mark is found at S673, S681, S683, and S839. Residues 738–880 (KVGYYTIPSM…GSWVFKVSHF (143 aa)) form the Peptidase S59 domain. Residue S881 is the Nucleophile of the active site. The interval 886–937 (QDSDEEEEEHPSKTSTKKLKTAPLPPASQTTPLQMALNGKPAPPPQSQSPEV) is disordered. Residues S888, S897, and S934 each carry the phosphoserine modification. Residue T1000 is modified to Phosphothreonine. Phosphoserine is present on residues S1023, S1028, S1043, S1060, and S1064. At T1070 the chain carries Phosphothreonine. Position 1329 is a phosphoserine (S1329). T1772 carries the post-translational modification Phosphothreonine.

This sequence belongs to the nucleoporin GLFG family. Part of the nuclear pore complex (NPC). Interacts directly with NUP96. Part of the Nup160 subcomplex in the nuclear pore which is composed of NUP160, NUP133, NUP107 and NUP96; this complex plays a role in RNA export and in tethering NUP98 and NUP153 to the nucleus. Interacts with RAE1. Does not interact with TPR. Interacts with NUP88. Interacts directly with NUP88 and NUP214, subunits of the cytoplasmic filaments of the NPC. Interacts (via N-terminus) with DHX9 (via DRBM, OB-fold and RGG domains); this interaction occurs in a RNA-dependent manner and stimulates DHX9-mediated ATPase activity. In terms of assembly, (Microbial infection) Interacts with HIV-1 capsid protein P24 and nucleocapsid protein P7 (in vitro); the interaction may promote the integration of the virus in the host nucleus (in vitro). As to quaternary structure, (Microbial infection) Interacts with vesicular stomatitis virus protein M. (Microbial infection) Interacts with SARS coronavirus-2/SARS-CoV-2 ORF6 protein; the interaction blocks STAT1 nuclear translocation, antagonizes interferon signaling and blocks mRNA nuclear export (ex vivo). In terms of assembly, (Microbial infection) Interacts with SARS coronavirus/SARS-CoV ORF6 protein. In terms of processing, isoform 1 to isoform 4 are autoproteolytically cleaved to yield Nup98 and Nup96 or Nup98 only, respectively. Cleaved Nup98 is necessary for the targeting of Nup98 to the nuclear pore and the interaction with Nup96. Proteolytically degraded after poliovirus (PV) infection; degradation is partial and NCP- and TPR-binding domains withstand degradation.

The protein resides in the nucleus membrane. The protein localises to the nucleus. It localises to the nuclear pore complex. It is found in the nucleoplasm. Its function is as follows. Plays a role in the nuclear pore complex (NPC) assembly and/or maintenance. NUP98 and NUP96 are involved in the bidirectional transport across the NPC. May anchor NUP153 and TPR to the NPC. In cooperation with DHX9, plays a role in transcription and alternative splicing activation of a subset of genes. Involved in the localization of DHX9 in discrete intranuclear foci (GLFG-body). In terms of biological role, (Microbial infection) Interacts with HIV-1 capsid protein P24 and nucleocapsid protein P7 and may thereby promote the integration of the virus in the host nucleus (in vitro). Binding affinity to HIV-1 CA-NC complexes bearing the capsid change Asn-74-Asp is reduced (in vitro). This Homo sapiens (Human) protein is Nuclear pore complex protein Nup98-Nup96.